Reading from the N-terminus, the 737-residue chain is Delta and Notch-like epidermal growth factor-related receptor (737 aa).

Positions 1–25 (MPPRRAQAPGAPLLPVLALLPLLLG) are cleaved as a signal peptide. At 26 to 640 (AGPQSGCLAS…LTNMPRHSLY (615 aa)) the chain is on the extracellular side. 2 EGF-like domains span residues 44 to 92 (APGP…TYCQ) and 94 to 133 (VADP…LNCE). Positions 44-133 (APGPCASQPC…NDGYEGLNCE (90 aa)) are interaction with NOTCH1. 6 disulfide bridges follow: Cys48–Cys59, Cys53–Cys80, Cys82–Cys91, Cys98–Cys108, Cys103–Cys121, and Cys123–Cys132. The N-linked (GlcNAc...) asparagine glycan is linked to Asn204. EGF-like domains follow at residues 309 to 348 (PGDS…TFCE), 349 to 390 (EFDA…ELCQ), 392 to 428 (KIDY…SACE), 430 to 466 (KVDP…PTCA), and 468 to 503 (LVDF…LYCE). Disulfide bonds link Cys319–Cys336, Cys338–Cys347, Cys353–Cys364, Cys358–Cys378, Cys380–Cys389, Cys396–Cys407, Cys401–Cys416, Cys418–Cys427, Cys434–Cys445, Cys439–Cys454, Cys456–Cys465, Cys472–Cys482, Cys477–Cys491, Cys493–Cys502, Cys509–Cys520, Cys514–Cys529, Cys531–Cys540, Cys547–Cys558, Cys552–Cys567, Cys569–Cys578, Cys585–Cys596, Cys590–Cys605, and Cys607–Cys616. An EGF-like 8; calcium-binding domain is found at 505 to 541 (EYNECLSAPCLNAATCRDLINGYECVCLAEYKGTHCE). The EGF-like 9 domain maps to 543–579 (YKDPCANISCLNGGTCDSEGLNGTCICAPGFTGEECD). N-linked (GlcNAc...) asparagine glycosylation is present at Asn564. The 37-residue stretch at 581 to 617 (DINECDSNPCHHAGTCLDQPNGYTCHCPHGWVGANCE) folds into the EGF-like 10; calcium-binding domain. The helical transmembrane segment at 641–661 (IIIGALCVAFILMLIILIVGI) threads the bilayer. The Cytoplasmic segment spans residues 662 to 737 (CRISRIEYQG…LVTLIKTKDL (76 aa)). Residues 677 to 680 (YEEF) are interaction with AP1G1 and somatodendritic targeting. Ser685 is modified (phosphoserine). Phosphotyrosine is present on Tyr711. Thr714 carries the phosphothreonine modification. Tyr721 carries the post-translational modification Phosphotyrosine. Residue Ser722 is modified to Phosphoserine.

Interacts with AP1G1. Interacts with NOTCH1. N-glycosylated. As to expression, specifically expressed in brain neurons (at protein level).

Its subcellular location is the cell membrane. Mediates neuron-glia interaction during astrocytogenesis. May promote differentiation of Bergmann glia during cerebellar development by activating DELTEX-dependent NOTCH1 signaling. The chain is Delta and Notch-like epidermal growth factor-related receptor (Dner) from Mus musculus (Mouse).